The sequence spans 335 residues: uncharacterized protein (335 aa).

3 disordered regions span residues 153–174 (LNDK…SDRI), 218–239 (HTSV…QEEV), and 254–295 (RCKV…PVTS). A compositionally biased stretch (acidic residues) spans 156–170 (KEDEEKLDQTTESEE). Composition is skewed to low complexity over residues 222-234 (RRSM…SASS) and 275-295 (THTS…PVTS).

This is an uncharacterized protein from Caenorhabditis elegans.